The primary structure comprises 427 residues: 3-phosphoshikimate 1-carboxyvinyltransferase (427 aa).

Lys22, Ser23, and Arg27 together coordinate 3-phosphoshikimate. Phosphoenolpyruvate is bound at residue Lys22. Gly96 and Arg124 together coordinate phosphoenolpyruvate. 3-phosphoshikimate contacts are provided by Ser169, Ser170, Gln171, Ser197, Asp313, Asn336, and Lys340. Phosphoenolpyruvate is bound at residue Gln171. The active-site Proton acceptor is Asp313. Phosphoenolpyruvate contacts are provided by Arg344, Arg386, and Lys411.

It belongs to the EPSP synthase family. Monomer.

Its subcellular location is the cytoplasm. The catalysed reaction is 3-phosphoshikimate + phosphoenolpyruvate = 5-O-(1-carboxyvinyl)-3-phosphoshikimate + phosphate. It functions in the pathway metabolic intermediate biosynthesis; chorismate biosynthesis; chorismate from D-erythrose 4-phosphate and phosphoenolpyruvate: step 6/7. Its function is as follows. Catalyzes the transfer of the enolpyruvyl moiety of phosphoenolpyruvate (PEP) to the 5-hydroxyl of shikimate-3-phosphate (S3P) to produce enolpyruvyl shikimate-3-phosphate and inorganic phosphate. The chain is 3-phosphoshikimate 1-carboxyvinyltransferase from Shigella dysenteriae.